Consider the following 244-residue polypeptide: tRNA (guanine-N(7)-)-methyltransferase (244 aa).

The tract at residues 1–24 is disordered; sequence MTDSHVPHPESPAVEEGEERPHRR. S-adenosyl-L-methionine contacts are provided by Glu-74, Glu-99, Asp-126, and Asp-149. Asp-149 is an active-site residue. Substrate is bound by residues Lys-153, Asp-185, and 222-225; that span reads TKFE.

This sequence belongs to the class I-like SAM-binding methyltransferase superfamily. TrmB family.

The enzyme catalyses guanosine(46) in tRNA + S-adenosyl-L-methionine = N(7)-methylguanosine(46) in tRNA + S-adenosyl-L-homocysteine. It participates in tRNA modification; N(7)-methylguanine-tRNA biosynthesis. In terms of biological role, catalyzes the formation of N(7)-methylguanine at position 46 (m7G46) in tRNA. The chain is tRNA (guanine-N(7)-)-methyltransferase from Pseudomonas savastanoi pv. phaseolicola (strain 1448A / Race 6) (Pseudomonas syringae pv. phaseolicola (strain 1448A / Race 6)).